We begin with the raw amino-acid sequence, 369 residues long: 2-aminoethylphosphonate--pyruvate transaminase (369 aa).

Lys-193 carries the post-translational modification N6-(pyridoxal phosphate)lysine.

Belongs to the class-V pyridoxal-phosphate-dependent aminotransferase family. PhnW subfamily. In terms of assembly, homodimer. Pyridoxal 5'-phosphate serves as cofactor.

It catalyses the reaction (2-aminoethyl)phosphonate + pyruvate = phosphonoacetaldehyde + L-alanine. In terms of biological role, involved in phosphonate degradation. The protein is 2-aminoethylphosphonate--pyruvate transaminase of Burkholderia pseudomallei (strain 1106a).